The primary structure comprises 528 residues: Esterase PE16 (528 aa).

Positions 1–93 (MSFVFAVPEM…AGWYVDAEAA (93 aa)) constitute a PE domain. The interval 94 to 143 (NAALVDTAATGASELGSGGRTALILGSTGTPRPPFDYMQQVYDRYIAPHY) is linker. Residues 149–369 (SGLYTPAQFQ…LRAIIELGYD (221 aa)) form the PE-PPE domain. S199 is a catalytic residue. A helical transmembrane segment spans residues 503–523 (IALLVFAAGIPAVAAVAILTG).

It belongs to the mycobacterial PE family.

It is found in the membrane. The enzyme catalyses a hexanoate ester + H2O = an aliphatic alcohol + hexanoate + H(+). The catalysed reaction is an octanoate ester + H2O = an aliphatic alcohol + octanoate + H(+). It catalyses the reaction a butanoate ester + H2O = an aliphatic alcohol + butanoate + H(+). With respect to regulation, esterase activity is significantly inhibited by the serine modifier phenylmethylsulfonyl fluoride (PMSF). Its function is as follows. Esterase that hydrolyzes short to medium chain fatty acid esters with the highest specific activity for p-nitrophenyl caproate (pNPC6). Has lower activity with p-nitrophenyl caprylate (pNPC8) and p-nitrophenyl butyrate (pNPC4). Has weak activity with p-nitrophenyl caprate (pNPC10) and p-nitrophenyl laurate (pNPC12). Does not possess lipolytic activity and cutinase activity. The protein is Esterase PE16 of Mycobacterium tuberculosis (strain ATCC 25618 / H37Rv).